Consider the following 84-residue polypeptide: Small ribosomal subunit protein uS17 (84 aa).

The protein belongs to the universal ribosomal protein uS17 family. In terms of assembly, part of the 30S ribosomal subunit.

In terms of biological role, one of the primary rRNA binding proteins, it binds specifically to the 5'-end of 16S ribosomal RNA. The protein is Small ribosomal subunit protein uS17 of Photorhabdus laumondii subsp. laumondii (strain DSM 15139 / CIP 105565 / TT01) (Photorhabdus luminescens subsp. laumondii).